The sequence spans 276 residues: Mitochondrial outer membrane protein porin of 34 kDa (276 aa).

It belongs to the eukaryotic mitochondrial porin (TC 1.B.8.1) family.

Its subcellular location is the mitochondrion outer membrane. In terms of biological role, forms a channel through the cell membrane that allows diffusion of small hydrophilic molecules. The channel adopts an open conformation at low or zero membrane potential and a closed conformation at potentials above 30-40 mV. The open state has a weak anion selectivity whereas the closed state is cation-selective. This is Mitochondrial outer membrane protein porin of 34 kDa from Solanum tuberosum (Potato).